We begin with the raw amino-acid sequence, 351 residues long: Thiamine-phosphate synthase (351 aa).

A unknown region spans residues 1 to 127 (MQNLAPASEG…SETAKALRYR (127 aa)). A disordered region spans residues 64–84 (RAARQTDQDPGTALSHPQERD). The thiamine-phosphate synthase stretch occupies residues 128 to 351 (VYILEQALTL…LRRLSQGEPS (224 aa)). Residues 178 to 182 (QYRDK) and Asn-210 contribute to the 4-amino-2-methyl-5-(diphosphooxymethyl)pyrimidine site. Positions 211 and 230 each coordinate Mg(2+). Ser-249 lines the 4-amino-2-methyl-5-(diphosphooxymethyl)pyrimidine pocket. 275 to 277 (TPT) contacts 2-[(2R,5Z)-2-carboxy-4-methylthiazol-5(2H)-ylidene]ethyl phosphate. 4-amino-2-methyl-5-(diphosphooxymethyl)pyrimidine is bound at residue Lys-278. Position 305 (Gly-305) interacts with 2-[(2R,5Z)-2-carboxy-4-methylthiazol-5(2H)-ylidene]ethyl phosphate.

Belongs to the thiamine-phosphate synthase family. It depends on Mg(2+) as a cofactor.

The catalysed reaction is 2-[(2R,5Z)-2-carboxy-4-methylthiazol-5(2H)-ylidene]ethyl phosphate + 4-amino-2-methyl-5-(diphosphooxymethyl)pyrimidine + 2 H(+) = thiamine phosphate + CO2 + diphosphate. The enzyme catalyses 2-(2-carboxy-4-methylthiazol-5-yl)ethyl phosphate + 4-amino-2-methyl-5-(diphosphooxymethyl)pyrimidine + 2 H(+) = thiamine phosphate + CO2 + diphosphate. It catalyses the reaction 4-methyl-5-(2-phosphooxyethyl)-thiazole + 4-amino-2-methyl-5-(diphosphooxymethyl)pyrimidine + H(+) = thiamine phosphate + diphosphate. Its pathway is cofactor biosynthesis; thiamine diphosphate biosynthesis; thiamine phosphate from 4-amino-2-methyl-5-diphosphomethylpyrimidine and 4-methyl-5-(2-phosphoethyl)-thiazole: step 1/1. Condenses 4-methyl-5-(beta-hydroxyethyl)thiazole monophosphate (THZ-P) and 2-methyl-4-amino-5-hydroxymethyl pyrimidine pyrophosphate (HMP-PP) to form thiamine monophosphate (TMP). In Thermosynechococcus vestitus (strain NIES-2133 / IAM M-273 / BP-1), this protein is Thiamine-phosphate synthase.